Reading from the N-terminus, the 419-residue chain is Putative nucleobase-ascorbate transporter 9 (419 aa).

Residues 1-22 (MANGAGNGGGGAGGNGGGGNNG) are compositionally biased toward gly residues. The interval 1 to 28 (MANGAGNGGGGAGGNGGGGNNGAGNRAE) is disordered. 10 helical membrane passes run 64–84 (LLSL…MGGG), 91–111 (VIQT…FFGT), 113–133 (LPVI…IIYS), 153–173 (IQGA…LGVW), 184–204 (SIAP…FPLV), 220–240 (GMML…SSGV), 273–293 (SFAM…LFYA), 313–333 (RVIQ…KFGA), 334–354 (FFAS…LCFV), and 370–390 (FNTK…PQYF).

It belongs to the nucleobase:cation symporter-2 (NCS2) (TC 2.A.40) family.

It localises to the membrane. This is Putative nucleobase-ascorbate transporter 9 (NAT9) from Arabidopsis thaliana (Mouse-ear cress).